The primary structure comprises 133 residues: ATP synthase epsilon chain (133 aa).

A disordered region spans residues 81-110 (AAERPEQIDTERARKAKERAEQRLASEHVD).

It belongs to the ATPase epsilon chain family. F-type ATPases have 2 components, CF(1) - the catalytic core - and CF(0) - the membrane proton channel. CF(1) has five subunits: alpha(3), beta(3), gamma(1), delta(1), epsilon(1). CF(0) has three main subunits: a, b and c.

The protein localises to the cell membrane. Functionally, produces ATP from ADP in the presence of a proton gradient across the membrane. The chain is ATP synthase epsilon chain from Shouchella clausii (strain KSM-K16) (Alkalihalobacillus clausii).